A 426-amino-acid chain; its full sequence is 3-phosphoshikimate 1-carboxyvinyltransferase (426 aa).

3-phosphoshikimate contacts are provided by K20, S21, and R25. Residue K20 coordinates phosphoenolpyruvate. Phosphoenolpyruvate is bound by residues G92 and R120. 3-phosphoshikimate is bound by residues S166, Q168, D312, and K339. Position 168 (Q168) interacts with phosphoenolpyruvate. D312 (proton acceptor) is an active-site residue. The phosphoenolpyruvate site is built by R343 and R385.

This sequence belongs to the EPSP synthase family. As to quaternary structure, monomer.

It localises to the cytoplasm. It catalyses the reaction 3-phosphoshikimate + phosphoenolpyruvate = 5-O-(1-carboxyvinyl)-3-phosphoshikimate + phosphate. Its pathway is metabolic intermediate biosynthesis; chorismate biosynthesis; chorismate from D-erythrose 4-phosphate and phosphoenolpyruvate: step 6/7. Its function is as follows. Catalyzes the transfer of the enolpyruvyl moiety of phosphoenolpyruvate (PEP) to the 5-hydroxyl of shikimate-3-phosphate (S3P) to produce enolpyruvyl shikimate-3-phosphate and inorganic phosphate. This chain is 3-phosphoshikimate 1-carboxyvinyltransferase, found in Enterococcus faecalis (strain ATCC 700802 / V583).